The following is a 432-amino-acid chain: Enolase (432 aa).

Residue Gln167 participates in (2R)-2-phosphoglycerate binding. Catalysis depends on Glu209, which acts as the Proton donor. 3 residues coordinate Mg(2+): Asp246, Glu290, and Asp317. Lys342, Arg371, Ser372, and Lys393 together coordinate (2R)-2-phosphoglycerate. Lys342 functions as the Proton acceptor in the catalytic mechanism.

The protein belongs to the enolase family. Component of the RNA degradosome, a multiprotein complex involved in RNA processing and mRNA degradation. Mg(2+) serves as cofactor.

It localises to the cytoplasm. The protein resides in the secreted. It is found in the cell surface. The catalysed reaction is (2R)-2-phosphoglycerate = phosphoenolpyruvate + H2O. The protein operates within carbohydrate degradation; glycolysis; pyruvate from D-glyceraldehyde 3-phosphate: step 4/5. In terms of biological role, catalyzes the reversible conversion of 2-phosphoglycerate (2-PG) into phosphoenolpyruvate (PEP). It is essential for the degradation of carbohydrates via glycolysis. The polypeptide is Enolase (Salmonella agona (strain SL483)).